The following is a 132-amino-acid chain: uncharacterized protein (132 aa).

4 helical membrane-spanning segments follow: residues 7-29, 44-62, 69-88, and 108-130; these read LALL…PTLF, VFPV…SLFL, LFLS…EFIV, and GVSM…ILIF.

It localises to the cell membrane. This is an uncharacterized protein from Aquifex aeolicus (strain VF5).